Consider the following 185-residue polypeptide: MFRCGIDYTRCRWILPMLLLFAIIFDIIAIAAQSGWVEDQDAKTHYASMWKQCRGRNDQWDCKSLMEFSWAQAVAALMIIGLIILIFAFIISLVALCSTVNVSLLPFIGLLLILAVIVQIIALIIYPVKFNEQIYEGYYDYTWAYGFGWGATILTLGCAILFCCLPRYESEITGLEKTKYIYQSG.

Helical transmembrane passes span 13–33, 74–94, 105–125, and 143–163; these read WILP…IAAQ, VAAL…ISLV, LPFI…ALII, and WAYG…ILFC.

The protein belongs to the TMEM47 family.

Its subcellular location is the cell junction. The protein localises to the desmosome. It localises to the cell membrane. It is found in the cytoplasm. Component of intercellular desmosome junctions. Positively regulates apoptosis in the early-stage embryo in response to UV irradiation, this is partially dependent on tp53 activation. Required for the survival of cell populations in the developing notochord and skin, therefore required for normal embryogenesis beyond 30 hpf. Acts as a positive regulator of endothelial cell apoptosis in response to blood flow-derived shear stress. The protein is p53 apoptosis effector related to PMP-22 of Danio rerio (Zebrafish).